The sequence spans 272 residues: GTP cyclohydrolase FolE2 (272 aa).

Belongs to the GTP cyclohydrolase IV family.

It carries out the reaction GTP + H2O = 7,8-dihydroneopterin 3'-triphosphate + formate + H(+). The protein operates within cofactor biosynthesis; 7,8-dihydroneopterin triphosphate biosynthesis; 7,8-dihydroneopterin triphosphate from GTP: step 1/1. Functionally, converts GTP to 7,8-dihydroneopterin triphosphate. This chain is GTP cyclohydrolase FolE2, found in Aromatoleum aromaticum (strain DSM 19018 / LMG 30748 / EbN1) (Azoarcus sp. (strain EbN1)).